Reading from the N-terminus, the 399-residue chain is Acetylornithine aminotransferase (399 aa).

Residues 102–103 and phenylalanine 138 contribute to the pyridoxal 5'-phosphate site; that span reads GA. N(2)-acetyl-L-ornithine is bound at residue arginine 141. 223 to 226 contributes to the pyridoxal 5'-phosphate binding site; sequence DEVQ. Lysine 252 is modified (N6-(pyridoxal phosphate)lysine). Threonine 280 is a binding site for pyridoxal 5'-phosphate.

The protein belongs to the class-III pyridoxal-phosphate-dependent aminotransferase family. ArgD subfamily. As to quaternary structure, homodimer. It depends on pyridoxal 5'-phosphate as a cofactor.

The protein resides in the cytoplasm. The catalysed reaction is N(2)-acetyl-L-ornithine + 2-oxoglutarate = N-acetyl-L-glutamate 5-semialdehyde + L-glutamate. The protein operates within amino-acid biosynthesis; L-arginine biosynthesis; N(2)-acetyl-L-ornithine from L-glutamate: step 4/4. The polypeptide is Acetylornithine aminotransferase (Ralstonia nicotianae (strain ATCC BAA-1114 / GMI1000) (Ralstonia solanacearum)).